The chain runs to 417 residues: Gamma-glutamyl phosphate reductase (417 aa).

This sequence belongs to the gamma-glutamyl phosphate reductase family.

It localises to the cytoplasm. It carries out the reaction L-glutamate 5-semialdehyde + phosphate + NADP(+) = L-glutamyl 5-phosphate + NADPH + H(+). The protein operates within amino-acid biosynthesis; L-proline biosynthesis; L-glutamate 5-semialdehyde from L-glutamate: step 2/2. Its function is as follows. Catalyzes the NADPH-dependent reduction of L-glutamate 5-phosphate into L-glutamate 5-semialdehyde and phosphate. The product spontaneously undergoes cyclization to form 1-pyrroline-5-carboxylate. The sequence is that of Gamma-glutamyl phosphate reductase from Shigella boydii serotype 18 (strain CDC 3083-94 / BS512).